Consider the following 274-residue polypeptide: DNA damage-inducible protein D (274 aa).

The polypeptide is DNA damage-inducible protein D (dinD) (Escherichia coli (strain K12)).